The primary structure comprises 209 residues: Ribosomal RNA large subunit methyltransferase E (209 aa).

5 residues coordinate S-adenosyl-L-methionine: Gly-63, Trp-65, Asp-83, Asp-99, and Asp-124. Catalysis depends on Lys-164, which acts as the Proton acceptor.

The protein belongs to the class I-like SAM-binding methyltransferase superfamily. RNA methyltransferase RlmE family.

The protein resides in the cytoplasm. The catalysed reaction is uridine(2552) in 23S rRNA + S-adenosyl-L-methionine = 2'-O-methyluridine(2552) in 23S rRNA + S-adenosyl-L-homocysteine + H(+). In terms of biological role, specifically methylates the uridine in position 2552 of 23S rRNA at the 2'-O position of the ribose in the fully assembled 50S ribosomal subunit. This Shewanella pealeana (strain ATCC 700345 / ANG-SQ1) protein is Ribosomal RNA large subunit methyltransferase E.